The following is a 167-amino-acid chain: Periplasmic nitrate reductase, electron transfer subunit (167 aa).

An N-terminal signal peptide occupies residues 1 to 34; that stretch reads MRRAHRAGERVMMKRFGIALLAVAIAAGASSLTA. Residues 40 to 65 form a disordered region; that stretch reads GLHGPAPLNDEGPAPPMLPNRNTSER. Positions 79, 93, 96, 97, 114, 133, 136, and 137 each coordinate heme c.

This sequence belongs to the NapB family. As to quaternary structure, component of the periplasmic nitrate reductase NapAB complex composed of NapA and NapB. Post-translationally, binds 2 heme C groups per subunit.

The protein resides in the periplasm. Its function is as follows. Electron transfer subunit of the periplasmic nitrate reductase complex NapAB. Receives electrons from the membrane-anchored tetraheme c-type NapC protein and transfers these to NapA subunit, thus allowing electron flow between membrane and periplasm. Essential for periplasmic nitrate reduction with nitrate as the terminal electron acceptor. This Bradyrhizobium japonicum protein is Periplasmic nitrate reductase, electron transfer subunit.